A 126-amino-acid polypeptide reads, in one-letter code: Small ribosomal subunit protein uS12 (126 aa).

The interval 1-26 (MPTINQLVRKGRASETTKSKSPALQD) is disordered. At aspartate 89 the chain carries 3-methylthioaspartic acid. The tract at residues 101 to 126 (SLDTQGVKDRKQARSKYGAKRAKAAK) is disordered. The span at 113 to 126 (ARSKYGAKRAKAAK) shows a compositional bias: basic residues.

This sequence belongs to the universal ribosomal protein uS12 family. In terms of assembly, part of the 30S ribosomal subunit. Contacts proteins S8 and S17. May interact with IF1 in the 30S initiation complex.

In terms of biological role, with S4 and S5 plays an important role in translational accuracy. Interacts with and stabilizes bases of the 16S rRNA that are involved in tRNA selection in the A site and with the mRNA backbone. Located at the interface of the 30S and 50S subunits, it traverses the body of the 30S subunit contacting proteins on the other side and probably holding the rRNA structure together. The combined cluster of proteins S8, S12 and S17 appears to hold together the shoulder and platform of the 30S subunit. This Burkholderia pseudomallei (strain 1106a) protein is Small ribosomal subunit protein uS12.